The primary structure comprises 521 residues: Glutamate--tRNA ligase (521 aa).

Residues 13–23 carry the 'HIGH' region motif; it reads PSPSGFLHVGG. Positions 253 to 257 match the 'KMSKS' region motif; sequence KLSKR. An ATP-binding site is contributed by K256.

This sequence belongs to the class-I aminoacyl-tRNA synthetase family. Glutamate--tRNA ligase type 1 subfamily. Monomer.

It localises to the cytoplasm. The catalysed reaction is tRNA(Glu) + L-glutamate + ATP = L-glutamyl-tRNA(Glu) + AMP + diphosphate. Catalyzes the attachment of glutamate to tRNA(Glu) in a two-step reaction: glutamate is first activated by ATP to form Glu-AMP and then transferred to the acceptor end of tRNA(Glu). The protein is Glutamate--tRNA ligase of Leptospira interrogans serogroup Icterohaemorrhagiae serovar copenhageni (strain Fiocruz L1-130).